A 142-amino-acid polypeptide reads, in one-letter code: Cell division protein SepF (142 aa).

The protein belongs to the SepF family. As to quaternary structure, homodimer. Interacts with FtsZ.

It is found in the cytoplasm. In terms of biological role, cell division protein that is part of the divisome complex and is recruited early to the Z-ring. Probably stimulates Z-ring formation, perhaps through the cross-linking of FtsZ protofilaments. Its function overlaps with FtsA. The protein is Cell division protein SepF of Geobacillus kaustophilus (strain HTA426).